Reading from the N-terminus, the 377-residue chain is D-alanine--D-alanine ligase (377 aa).

The ATP-grasp domain maps to 140-349 (KELLTVNGIR…NAKLVDMLID (210 aa)). 170–225 (VAELGNIVFVKAANQGSSVGISRVTNAEEYTEALSDSFQYDYKVLIEEAVNGAREL) contacts ATP. Residues D303, E316, and N318 each coordinate Mg(2+).

It belongs to the D-alanine--D-alanine ligase family. Mg(2+) serves as cofactor. It depends on Mn(2+) as a cofactor.

It localises to the cytoplasm. It carries out the reaction 2 D-alanine + ATP = D-alanyl-D-alanine + ADP + phosphate + H(+). The protein operates within cell wall biogenesis; peptidoglycan biosynthesis. Functionally, cell wall formation. The sequence is that of D-alanine--D-alanine ligase from Leuconostoc mesenteroides subsp. mesenteroides (strain ATCC 8293 / DSM 20343 / BCRC 11652 / CCM 1803 / JCM 6124 / NCDO 523 / NBRC 100496 / NCIMB 8023 / NCTC 12954 / NRRL B-1118 / 37Y).